A 170-amino-acid polypeptide reads, in one-letter code: VIP peptides (170 aa).

An N-terminal signal peptide occupies residues 1-21 (MEARSKPQFLAFLILFSVLFS). Positions 22–79 (QSLAWPLFGPPSVVRLDDRMPFEGAGDPDQVSLKADSDILQNPLAENGTPYYDVSRNA) are excised as a propeptide. A Phosphoserine modification is found at serine 76. Isoleucine 107 is modified (isoleucine amide). Asparagine 133 carries an N-linked (GlcNAc...) asparagine glycan. An Asparagine amide modification is found at asparagine 152. The propeptide occupies 156-170 (SSEGDSADFLEELEK).

Belongs to the glucagon family.

Its subcellular location is the secreted. Its function is as follows. VIP is a neuropeptide involved in a diverse array of physiological processes through activating the PACAP subfamily of class B1 G protein-coupled receptors: VIP receptor 1 (VPR1) and VIP receptor 2 (VPR2). Abundantly expressed throughout the CNS and peripheral nervous systems where they primarily exert neuroprotective and immune modulatory roles. Also causes vasodilation, lowers arterial blood pressure, stimulates myocardial contractility, increases glycogenolysis and relaxes the smooth muscle of trachea, stomach and gall bladder. In terms of biological role, PHM-27 and PHV-42 are two bioactive forms from proteolysis of the same precursor protein, that cause vasodilation. PHM-27 is a potent agonist of the calcitonin receptor CALCR, with similar efficacy as calcitonin. The chain is VIP peptides (Vip) from Mus musculus (Mouse).